Reading from the N-terminus, the 98-residue chain is NADH-ubiquinone oxidoreductase chain 4L (98 aa).

3 helical membrane-spanning segments follow: residues 1-21 (MSMV…GLLM), 29-49 (SLLC…VTIL), and 61-81 (IILL…LVMV).

It belongs to the complex I subunit 4L family. Core subunit of respiratory chain NADH dehydrogenase (Complex I) which is composed of 45 different subunits.

Its subcellular location is the mitochondrion inner membrane. It carries out the reaction a ubiquinone + NADH + 5 H(+)(in) = a ubiquinol + NAD(+) + 4 H(+)(out). Core subunit of the mitochondrial membrane respiratory chain NADH dehydrogenase (Complex I) which catalyzes electron transfer from NADH through the respiratory chain, using ubiquinone as an electron acceptor. Part of the enzyme membrane arm which is embedded in the lipid bilayer and involved in proton translocation. This chain is NADH-ubiquinone oxidoreductase chain 4L (MT-ND4L), found in Callorhinus ursinus (Northern fur seal).